The primary structure comprises 214 residues: Large ribosomal subunit protein uL16 (214 aa).

Belongs to the universal ribosomal protein uL16 family. As to quaternary structure, component of the large ribosomal subunit. Mature ribosomes consist of a small (40S) and a large (60S) subunit. The 40S subunit contains about 33 different proteins and 1 molecule of RNA (18S). The 60S subunit contains about 49 different proteins and 3 molecules of RNA (28S, 5.8S and 5S).

The polypeptide is Large ribosomal subunit protein uL16 (rpl-10L) (Caenorhabditis elegans).